The chain runs to 532 residues: Tegument protein UL21 (532 aa).

A disordered region spans residues 251-276 (SPSVSSAPPPSAPDASLPPPGLQEAA). The segment covering 257 to 276 (APPPSAPDASLPPPGLQEAA) has biased composition (pro residues).

Belongs to the alphaherpesvirinae UL21 protein family. Interacts (via C-terminus) with UL16.

The protein resides in the virion tegument. It is found in the host cytoplasm. Its subcellular location is the host nucleus. Its function is as follows. May participate in DNA packaging/capsid maturation events. Promotes efficient incorporation of tegument proteins UL46, UL49, and US3 into virions. May also play a role in capsid transport to the trans-Golgi network (TGN). The polypeptide is Tegument protein UL21 (Human herpesvirus 2 (strain HG52) (HHV-2)).